The sequence spans 692 residues: DNA ligase (692 aa).

NAD(+)-binding positions include Asp35–Asp39, Ser88–Leu89, and Glu117. Lys119 (N6-AMP-lysine intermediate) is an active-site residue. Residues Arg140, Glu176, Lys301, and Lys325 each coordinate NAD(+). Zn(2+) contacts are provided by Cys416, Cys419, Cys434, and Cys439. The BRCT domain maps to Leu611 to Thr692.

It belongs to the NAD-dependent DNA ligase family. LigA subfamily. Mg(2+) is required as a cofactor. It depends on Mn(2+) as a cofactor.

The enzyme catalyses NAD(+) + (deoxyribonucleotide)n-3'-hydroxyl + 5'-phospho-(deoxyribonucleotide)m = (deoxyribonucleotide)n+m + AMP + beta-nicotinamide D-nucleotide.. In terms of biological role, DNA ligase that catalyzes the formation of phosphodiester linkages between 5'-phosphoryl and 3'-hydroxyl groups in double-stranded DNA using NAD as a coenzyme and as the energy source for the reaction. It is essential for DNA replication and repair of damaged DNA. This is DNA ligase from Mesomycoplasma hyopneumoniae (strain 7448) (Mycoplasma hyopneumoniae).